A 470-amino-acid chain; its full sequence is Sorting nexin-17 (470 aa).

A PX domain is found at 1 to 109 (MHFSIPETES…SFLRRAQQET (109 aa)). Residues Arg-36, Ser-38, Lys-62, and Arg-75 each coordinate a 1,2-diacyl-sn-glycero-3-phospho-(1D-myo-inositol-3-phosphate). A Ras-associating domain is found at 115–206 (EEVSLEVLLS…YKIVLRKSYW (92 aa)). Residues 115–432 (EEVSLEVLLS…DASRESMVKL (318 aa)) form an FERM-like region. The segment at 270–432 (GYLRFDACVA…DASRESMVKL (163 aa)) is PTB-like F3 module. The disordered stretch occupies residues 401–425 (GGNLRRSDSQQAVKSPPLLESPDAS). 6 positions are modified to phosphoserine: Ser-407, Ser-409, Ser-415, Ser-421, Ser-437, and Ser-440.

This sequence belongs to the sorting nexin family. Monomer. Interacts with APP (via cytoplasmic YXNPXY motif). Interacts with KIF1B. Interacts with the C-termini of P-selectin, PTC, LDLR, VLDLR, LRP1 and LRP8. Interacts with KRIT1 (via N-terminus). Interacts with HRAS. Interacts with ITGB1 and ITGB5 (via NPxY motif). Interacts with CCDC22 and CCDC93; the interaction associates SNX17 with the CCC complex. Interacts (via C-terminus) with VPS26C and VPS35L; the interactions are direct and associate SNX17 with the retriever complex.

It localises to the cytoplasm. The protein resides in the early endosome. The protein localises to the cytoplasmic vesicle membrane. Critical regulator of endosomal recycling of numerous surface proteins, including integrins, signaling receptor and channels. Binds to NPxY sequences in the cytoplasmic tails of target cargos. Associates with retriever and CCC complexes to prevent lysosomal degradation and promote cell surface recycling of numerous cargos such as integrins ITGB1, ITGB5 and their associated alpha subunits. Also required for maintenance of normal cell surface levels of APP and LRP1. Interacts with membranes containing phosphatidylinositol 3-phosphate (PtdIns(3P)). The protein is Sorting nexin-17 (Snx17) of Rattus norvegicus (Rat).